The sequence spans 129 residues: MREKSFQCNESGKAFNCSSLLKKCQIIHLGEKKYKCDICGKVFNQKRYLAYHHRCHTGEKPYKCNQCGKTFSYKSSLVIHKAIHTGEKPHKCNECGKVFNQKAYLASHHRLHTGEKPYKCEECDKVFSR.

3 consecutive C2H2-type zinc fingers follow at residues 34 to 56 (YKCD…HRCH), 62 to 84 (YKCN…KAIH), and 90 to 112 (HKCN…HRLH).

It belongs to the krueppel C2H2-type zinc-finger protein family.

It is found in the nucleus. Its function is as follows. May be involved in transcriptional regulation. This is Putative zinc finger protein 702 (ZNF702P) from Homo sapiens (Human).